The primary structure comprises 595 residues: S-(+)-linalool synthase, chloroplastic (595 aa).

A chloroplast-targeting transit peptide spans methionine 1–arginine 46. Over residues serine 27 to serine 40 the composition is skewed to low complexity. A disordered region spans residues serine 27 to proline 54. (2E)-geranyl diphosphate contacts are provided by arginine 309, aspartate 346, aspartate 350, arginine 487, and aspartate 490. Mg(2+) is bound by residues aspartate 346 and aspartate 350. A DDXXD motif motif is present at residues aspartate 346–aspartate 350. Positions 490, 494, and 498 each coordinate Mg(2+).

It belongs to the terpene synthase family. Tpsb subfamily. Mg(2+) is required as a cofactor. Mn(2+) serves as cofactor.

It localises to the plastid. Its subcellular location is the chloroplast. It catalyses the reaction (2E)-geranyl diphosphate + H2O = (S)-linalool + diphosphate. It functions in the pathway secondary metabolite biosynthesis; terpenoid biosynthesis. Involved in monoterpene (C10) biosynthesis. The major product is S-(+)-linalool. Linalool production is induced by jasmonate in response to pathogen attack, it possesses antibacterial activity and is important for resistance to the bacterial blight pathogen Xanthomonas oryzae pv. oryzae (Xoo). Plants over-expressing linalool synthase display enhanced resistance to Xoo. The chain is S-(+)-linalool synthase, chloroplastic from Oryza sativa subsp. japonica (Rice).